The primary structure comprises 322 residues: MADVLTELPGVGPSTADKLIEGGYLDFMKIATATIGELTDIEGISEKAAAKMIMAARDLCDLGFKSGVELLKQRQSVWRLSTGSTELGTVLAGGIESQSVTEFAGMFGSGKTQIMHQTCVNLQMREKIFADLEGVVEEELEAPKAVYIDTEGTFRPERVVQMAEGAGIDGQTVLDNTFVARAYNSDMQMLFAEKIEDLIKGGNNIKLVIIDSLTSTFRNEFTGRGKLAERQQKLGRHMATLNKLADLYNCIVLVTNQVAAKPDAYFGVAEQAIGGHVVGHAATFRFFLRKSKGDKRVAKLYDSPHLPDSEAVFRITEKGIQD.

105-112 (GMFGSGKT) contributes to the ATP binding site.

Belongs to the eukaryotic RecA-like protein family.

Its function is as follows. Involved in DNA repair and in homologous recombination. Binds and assemble on single-stranded DNA to form a nucleoprotein filament. Hydrolyzes ATP in a ssDNA-dependent manner and promotes DNA strand exchange between homologous DNA molecules. The protein is DNA repair and recombination protein RadA of Methanococcus maripaludis (Methanococcus deltae).